A 329-amino-acid polypeptide reads, in one-letter code: Phosphate acyltransferase (329 aa).

This sequence belongs to the PlsX family. Homodimer. Probably interacts with PlsY.

It is found in the cytoplasm. It carries out the reaction a fatty acyl-[ACP] + phosphate = an acyl phosphate + holo-[ACP]. Its pathway is lipid metabolism; phospholipid metabolism. Catalyzes the reversible formation of acyl-phosphate (acyl-PO(4)) from acyl-[acyl-carrier-protein] (acyl-ACP). This enzyme utilizes acyl-ACP as fatty acyl donor, but not acyl-CoA. This is Phosphate acyltransferase from Geobacillus sp. (strain WCH70).